Here is a 269-residue protein sequence, read N- to C-terminus: Hydroxyethylthiazole kinase (269 aa).

Met-42 is a substrate binding site. Positions 118 and 164 each coordinate ATP. Gly-191 contributes to the substrate binding site.

This sequence belongs to the Thz kinase family. Requires Mg(2+) as cofactor.

The catalysed reaction is 5-(2-hydroxyethyl)-4-methylthiazole + ATP = 4-methyl-5-(2-phosphooxyethyl)-thiazole + ADP + H(+). The protein operates within cofactor biosynthesis; thiamine diphosphate biosynthesis; 4-methyl-5-(2-phosphoethyl)-thiazole from 5-(2-hydroxyethyl)-4-methylthiazole: step 1/1. Functionally, catalyzes the phosphorylation of the hydroxyl group of 4-methyl-5-beta-hydroxyethylthiazole (THZ). This chain is Hydroxyethylthiazole kinase, found in Listeria welshimeri serovar 6b (strain ATCC 35897 / DSM 20650 / CCUG 15529 / CIP 8149 / NCTC 11857 / SLCC 5334 / V8).